A 64-amino-acid polypeptide reads, in one-letter code: MPKMKTHSGAKKRFKLTGSGKLRRQQANRRHYLEHKSSRLTRRLAGDKIVFKGDAKVIRKMLGI.

Positions 1–29 (MPKMKTHSGAKKRFKLTGSGKLRRQQANR) are disordered.

It belongs to the bacterial ribosomal protein bL35 family.

The chain is Large ribosomal subunit protein bL35 from Pseudarthrobacter chlorophenolicus (strain ATCC 700700 / DSM 12829 / CIP 107037 / JCM 12360 / KCTC 9906 / NCIMB 13794 / A6) (Arthrobacter chlorophenolicus).